The sequence spans 105 residues: Phosphoribosyl-ATP pyrophosphatase (105 aa).

It belongs to the PRA-PH family.

It is found in the cytoplasm. It catalyses the reaction 1-(5-phospho-beta-D-ribosyl)-ATP + H2O = 1-(5-phospho-beta-D-ribosyl)-5'-AMP + diphosphate + H(+). It participates in amino-acid biosynthesis; L-histidine biosynthesis; L-histidine from 5-phospho-alpha-D-ribose 1-diphosphate: step 2/9. The protein is Phosphoribosyl-ATP pyrophosphatase of Ruegeria sp. (strain TM1040) (Silicibacter sp.).